The sequence spans 811 residues: Potassium transporter 27 (811 aa).

Topologically, residues 1–64 (MGDDVLGRGS…QEESWARTLK (64 aa)) are cytoplasmic. A helical membrane pass occupies residues 65 to 85 (LAFQCVGILYGDIGTSPLFVY). The Extracellular portion of the chain corresponds to 86–102 (SSTFKDGVRHPDDLLGA). The helical transmembrane segment at 103-123 (LSLIIYSFALFTIVKYVFIAL) threads the bilayer. The Cytoplasmic segment spans residues 124–188 (RANDDGDGGT…ELLETNRAVK (65 aa)). A helical transmembrane segment spans residues 189-209 (IWLFLLTILATAMVISDAVLT). The Extracellular portion of the chain corresponds to 210-226 (PAISVLSAVGGLKEKAP). The chain crosses the membrane as a helical span at residues 227-247 (NLTTDEIVWITVATLVVLFAI). The Cytoplasmic portion of the chain corresponds to 248–254 (QRFGTDK). The chain crosses the membrane as a helical span at residues 255–275 (IGYLFAPIILLWLLLIGCVGI). Over 276–310 (YNTIKFDTGVLRAFNLKYIIDYFRRNKKDGWISLS) the chain is Extracellular. Residues 311-331 (GILLCFTGTEALFSDLGYFSI) form a helical membrane-spanning segment. The Cytoplasmic portion of the chain corresponds to 332-335 (RSIQ). A helical membrane pass occupies residues 336 to 356 (LSFSFGLVPSVLLAYIGQAAY). The Extracellular segment spans residues 357–375 (LREHPEHIANTFYRSTPNV). Residues 376–396 (MFWPTFILAVAASIIGSQAMI) traverse the membrane as a helical segment. Over 397 to 434 (SCAFATISHLQTLNCFPRVKILHTSRQYSGQLYIPEVN) the chain is Cytoplasmic. Residues 435–455 (FLLCVGACLVTIGFKTTVIIG) traverse the membrane as a helical segment. The Extracellular portion of the chain corresponds to 456-459 (EAHA). The helical transmembrane segment at 460–480 (ICVVFVMIITTLLLTIVMLLV) threads the bilayer. Over 481-482 (WK) the chain is Cytoplasmic. Residues 483 to 503 (VSIWYVALFFIVFMSSESIYL) form a helical membrane-spanning segment. The Extracellular portion of the chain corresponds to 504 to 515 (SAVLYQFVHGEY). Residues 516 to 536 (VPVAMSVFLMIVMTVWHYVHV) form a helical membrane-spanning segment. Topologically, residues 537 to 811 (KRYEFELEHT…VLKVGIAYEI (275 aa)) are cytoplasmic.

It belongs to the HAK/KUP transporter (TC 2.A.72.3) family.

It is found in the membrane. In terms of biological role, high-affinity potassium transporter. In Oryza sativa subsp. japonica (Rice), this protein is Potassium transporter 27 (HAK27).